Here is a 967-residue protein sequence, read N- to C-terminus: LRR receptor-like serine/threonine-protein kinase ERL2 (967 aa).

The signal sequence occupies residues Met1–Pro27. The Extracellular segment spans residues Met28–Arg585. N-linked (GlcNAc...) asparagine glycosylation is found at Asn70 and Asn79. 20 LRR repeats span residues Asn74–Met97, Asn98–Cys120, Ser122–Lys145, Gln146–Thr166, Asn170–Asn192, Val194–Leu216, Gly218–Cys240, Ser242–Ile261, Gln265–Met287, Ala289–Leu311, Phe313–Met335, Arg337–Leu359, Gln361–Ser382, Ala385–Asn406, Ser409–Ile431, Asn433–Glu456, His457–Leu479, Ser481–Leu503, Asn505–Cys527, and Ser529–Phe550. N-linked (GlcNAc...) asparagine glycosylation is found at Asn228 and Asn239. N-linked (GlcNAc...) asparagine glycans are attached at residues Asn310 and Asn334. An N-linked (GlcNAc...) asparagine glycan is attached at Asn379. Residues Asn414, Asn443, Asn462, and Asn469 are each glycosylated (N-linked (GlcNAc...) asparagine). Residues Asn534, Asn539, and Asn549 are each glycosylated (N-linked (GlcNAc...) asparagine). A helical membrane pass occupies residues Val586–Val606. The Cytoplasmic segment spans residues Tyr607–Leu967. Residues Thr640 and Thr648 each carry the phosphothreonine modification. The 271-residue stretch at Leu651 to Val921 folds into the Protein kinase domain. Residues Ile657–Val665 and Lys679 contribute to the ATP site. Phosphotyrosine occurs at positions 724 and 763. Residue Asp776 is the Proton acceptor of the active site. Phosphotyrosine is present on Tyr818. The residue at position 826 (Thr826) is a Phosphothreonine. Positions Val921–Phe955 are disordered. Residues Gln936 to Ser946 show a composition bias toward basic and acidic residues.

This sequence belongs to the protein kinase superfamily. Ser/Thr protein kinase family. Mostly expressed in developing organs, including bud clusters, flowers, siliques and young rosettes. Also detected in mature aboveground organs, such as leaves, stems and pedicels, but barely in roots.

Its subcellular location is the membrane. It catalyses the reaction L-seryl-[protein] + ATP = O-phospho-L-seryl-[protein] + ADP + H(+). The enzyme catalyses L-threonyl-[protein] + ATP = O-phospho-L-threonyl-[protein] + ADP + H(+). Functionally, receptor kinase that regulates inflorescence architecture and organ shape as well as stomatal patterning, including density and clustering, together with ERL1 and ER. This Arabidopsis thaliana (Mouse-ear cress) protein is LRR receptor-like serine/threonine-protein kinase ERL2 (ERL2).